We begin with the raw amino-acid sequence, 104 residues long: L-rhamnose mutarotase (104 aa).

Tyr18 is a binding site for substrate. His22 serves as the catalytic Proton donor. Substrate-binding positions include Tyr41 and 76–77 (WW).

This sequence belongs to the rhamnose mutarotase family. As to quaternary structure, homodimer.

The protein resides in the cytoplasm. It catalyses the reaction alpha-L-rhamnose = beta-L-rhamnose. The protein operates within carbohydrate metabolism; L-rhamnose metabolism. Functionally, involved in the anomeric conversion of L-rhamnose. In Salmonella newport (strain SL254), this protein is L-rhamnose mutarotase.